Consider the following 1598-residue polypeptide: Transposon Ty2-LR2 Gag-Pol polyprotein (1598 aa).

Composition is skewed to polar residues over residues 1–11 (MESQQLHQNPH), 19–39 (ASVT…SASN), and 49–60 (KVNSQEETTPGT). 2 disordered regions span residues 1 to 88 (MESQ…YQQH) and 359 to 449 (QHSE…SNDE). Residues 295-397 (ENNINVSDRL…SSKPRAAKAH (103 aa)) are RNA-binding. The segment covering 369–381 (TSPNTTNTKVTTR) has biased composition (low complexity). 2 stretches are compositionally biased toward polar residues: residues 399–408 (IATSSKFSRV) and 415–435 (ESTV…GQQQ). D457 acts as the For protease activity; shared with dimeric partner in catalysis. An integrase-type zinc finger-like region spans residues 579-636 (NVNKSKSVNKYPYPLIHRMLGHANFRSIQKSLKKNAVTYLKESDIEWSNASTYQCPDC). Residues 656–831 (ESYEPFQYLH…AGLDITTILP (176 aa)) enclose the Integrase catalytic domain. Residues D667 and D732 each contribute to the Mg(2+) site. 3 stretches are compositionally biased toward polar residues: residues 915-927 (SFIE…QSYD), 1009-1034 (ESDT…STNE), and 1065-1082 (QRNS…STPS). Disordered stretches follow at residues 915 to 934 (SFIE…ESDH), 1004 to 1034 (MGGT…STNE), 1059 to 1135 (TEEP…KSSK), 1146 to 1165 (LPLP…VSKD), and 1170 to 1205 (HSRQ…TEIE). Over residues 1151–1165 (LTHKSPTDTSDVSKD) the composition is skewed to basic and acidic residues. The Bipartite nuclear localization signal signature appears at 1193–1227 (KKRSLEDNETEIEVSRDTWNNKNMRSLEPPRSKKR). A Reverse transcriptase Ty1/copia-type domain is found at 1353–1491 (NDYYITQLDI…DILGLEIKYQ (139 aa)). Residues D1361, D1442, and D1443 each coordinate Mg(2+).

The capsid protein forms a homotrimer, from which the VLPs are assembled. The protease is a homodimer, whose active site consists of two apposed aspartic acid residues. In terms of processing, initially, virus-like particles (VLPs) are composed of the structural unprocessed proteins Gag and Gag-Pol, and also contain the host initiator methionine tRNA (tRNA(i)-Met) which serves as a primer for minus-strand DNA synthesis, and a dimer of genomic Ty RNA. Processing of the polyproteins occurs within the particle and proceeds by an ordered pathway, called maturation. First, the protease (PR) is released by autocatalytic cleavage of the Gag-Pol polyprotein, and this cleavage is a prerequisite for subsequent processing at the remaining sites to release the mature structural and catalytic proteins. Maturation takes place prior to the RT reaction and is required to produce transposition-competent VLPs.

It localises to the cytoplasm. Its subcellular location is the nucleus. It carries out the reaction DNA(n) + a 2'-deoxyribonucleoside 5'-triphosphate = DNA(n+1) + diphosphate. The enzyme catalyses Endonucleolytic cleavage to 5'-phosphomonoester.. In terms of biological role, capsid protein (CA) is the structural component of the virus-like particle (VLP), forming the shell that encapsulates the retrotransposons dimeric RNA genome. The particles are assembled from trimer-clustered units and there are holes in the capsid shells that allow for the diffusion of macromolecules. CA also has nucleocapsid-like chaperone activity, promoting primer tRNA(i)-Met annealing to the multipartite primer-binding site (PBS), dimerization of Ty2 RNA and initiation of reverse transcription. The aspartyl protease (PR) mediates the proteolytic cleavages of the Gag and Gag-Pol polyproteins after assembly of the VLP. Functionally, reverse transcriptase/ribonuclease H (RT) is a multifunctional enzyme that catalyzes the conversion of the retro-elements RNA genome into dsDNA within the VLP. The enzyme displays a DNA polymerase activity that can copy either DNA or RNA templates, and a ribonuclease H (RNase H) activity that cleaves the RNA strand of RNA-DNA heteroduplexes during plus-strand synthesis and hydrolyzes RNA primers. The conversion leads to a linear dsDNA copy of the retrotransposon that includes long terminal repeats (LTRs) at both ends. Its function is as follows. Integrase (IN) targets the VLP to the nucleus, where a subparticle preintegration complex (PIC) containing at least integrase and the newly synthesized dsDNA copy of the retrotransposon must transit the nuclear membrane. Once in the nucleus, integrase performs the integration of the dsDNA into the host genome. The polypeptide is Transposon Ty2-LR2 Gag-Pol polyprotein (TY2B-LR2) (Saccharomyces cerevisiae (strain ATCC 204508 / S288c) (Baker's yeast)).